A 467-amino-acid polypeptide reads, in one-letter code: ATP synthase subunit beta, sodium ion specific (467 aa).

151 to 158 (GGAGVGKT) is a binding site for ATP.

This sequence belongs to the ATPase alpha/beta chains family. In terms of assembly, F-type ATPases have 2 components, CF(1) - the catalytic core - and CF(0) - the membrane proton channel. CF(1) has five subunits: alpha(3), beta(3), gamma(1), delta(1), epsilon(1). CF(0) has three main subunits: a, b and c.

The protein localises to the cell membrane. The catalysed reaction is 4 Na(+)(in) + ATP + H2O = 4 Na(+)(out) + ADP + phosphate + H(+). In terms of biological role, produces ATP from ADP in the presence of a sodium ion gradient across the membrane. The beta chain is the catalytic subunit. This is ATP synthase subunit beta, sodium ion specific from Propionigenium modestum.